The following is a 289-amino-acid chain: Glycine--tRNA ligase alpha subunit (289 aa).

This sequence belongs to the class-II aminoacyl-tRNA synthetase family. As to quaternary structure, tetramer of two alpha and two beta subunits.

The protein localises to the cytoplasm. It catalyses the reaction tRNA(Gly) + glycine + ATP = glycyl-tRNA(Gly) + AMP + diphosphate. The polypeptide is Glycine--tRNA ligase alpha subunit (Prochlorococcus marinus (strain MIT 9515)).